A 926-amino-acid polypeptide reads, in one-letter code: Storkhead-box protein 2 (926 aa).

Disordered stretches follow at residues 1–32 (MKKTRSTTLRRAWPSSDFSDRASDRMRSRSEK), 338–394 (EEEK…IPGG), 452–529 (EMPF…SYVD), 632–693 (GVKK…SLDK), 724–803 (LKSH…GTMQ), and 825–926 (LAPK…VTSV). Basic and acidic residues predominate over residues 18–32 (FSDRASDRMRSRSEK). Over residues 353–378 (HSGRSKKSRTHRKSHGKSRSHSKTRV) the composition is skewed to basic residues. The segment covering 379–394 (SKGDPSDGSHLDIPGG) has biased composition (basic and acidic residues). Residues 463-472 (SHSKVHRSHS) show a composition bias toward basic residues. The segment covering 473-495 (HTQDRRSRNERSNKAKERSRSMD) has biased composition (basic and acidic residues). Polar residues predominate over residues 518–529 (QDDQTPSQSYVD). Basic and acidic residues-rich tracts occupy residues 632–658 (GVKKLSPSDRQVPHSSREPVGHKEESP) and 684–693 (HGAEPSSLDK). The span at 746–772 (LGTSAAQATPASQRQQESGGNQETSFD) shows a compositional bias: polar residues. A compositionally biased stretch (basic and acidic residues) spans 785 to 799 (GANKNTEEEKNREDV). 2 stretches are compositionally biased toward polar residues: residues 847 to 884 (MDSSSITVDSGFNSPRTRESLASNTSSIVESNRRQNPA) and 914 to 926 (KPSNCLQASVTSV).

In Macaca fascicularis (Crab-eating macaque), this protein is Storkhead-box protein 2 (STOX2).